A 361-amino-acid polypeptide reads, in one-letter code: D-alanine--D-alanine ligase (361 aa).

Positions 149–353 constitute an ATP-grasp domain; that stretch reads KKLMAAEGLP…YEELLDVLVQ (205 aa). Position 176–231 (176–231) interacts with ATP; sequence KKLLGLPVFVKPARGGSSIGISKVSRWEDLPAAVDLARQHDEKVIVESEIVGPEVE. Mg(2+)-binding residues include Asp-308, Glu-320, and Asn-322.

Belongs to the D-alanine--D-alanine ligase family. Requires Mg(2+) as cofactor. It depends on Mn(2+) as a cofactor.

It is found in the cytoplasm. It catalyses the reaction 2 D-alanine + ATP = D-alanyl-D-alanine + ADP + phosphate + H(+). The protein operates within cell wall biogenesis; peptidoglycan biosynthesis. Cell wall formation. The polypeptide is D-alanine--D-alanine ligase (Corynebacterium efficiens (strain DSM 44549 / YS-314 / AJ 12310 / JCM 11189 / NBRC 100395)).